The following is a 373-amino-acid chain: Enoyl-[acyl-carrier-protein] reductase, mitochondrial (373 aa).

The N-terminal 53 residues, 1–53 (MWVCGALCRTRAPAQLGQRLLPESRRRRPASASFSASAEPSRVRALVYGHHGD), are a transit peptide targeting the mitochondrion. At K61 the chain carries N6-acetyllysine; alternate. K61 is modified (N6-succinyllysine; alternate). Y94 acts as the Proton donor in catalysis. NADP(+) is bound by residues N167, 193 to 196 (NSGV), and 216 to 218 (RDT). N6-acetyllysine; alternate is present on residues K252 and K267. K252 and K267 each carry N6-succinyllysine; alternate. Residues 285-288 (YGGM) and 310-312 (FWL) contribute to the NADP(+) site. At K316 the chain carries N6-succinyllysine. K368 lines the NADP(+) pocket.

The protein belongs to the zinc-containing alcohol dehydrogenase family. Quinone oxidoreductase subfamily. Homodimer.

The protein resides in the mitochondrion. The enzyme catalyses a 2,3-saturated acyl-[ACP] + NADP(+) = a (2E)-enoyl-[ACP] + NADPH + H(+). It catalyses the reaction (2E)-butenoyl-[ACP] + NADPH + H(+) = butanoyl-[ACP] + NADP(+). It carries out the reaction (2E)-hexenoyl-[ACP] + NADPH + H(+) = hexanoyl-[ACP] + NADP(+). The catalysed reaction is (2E)-octenoyl-[ACP] + NADPH + H(+) = octanoyl-[ACP] + NADP(+). The enzyme catalyses (2E)-decenoyl-[ACP] + NADPH + H(+) = decanoyl-[ACP] + NADP(+). It catalyses the reaction (2E)-dodecenoyl-[ACP] + NADPH + H(+) = dodecanoyl-[ACP] + NADP(+). It carries out the reaction (2E)-tetradecenoyl-[ACP] + NADPH + H(+) = tetradecanoyl-[ACP] + NADP(+). The catalysed reaction is (2E)-hexadecenoyl-[ACP] + NADPH + H(+) = hexadecanoyl-[ACP] + NADP(+). In terms of biological role, catalyzes the NADPH-dependent reduction of trans-2-enoyl thioesters in mitochondrial fatty acid synthesis (fatty acid synthesis type II). Fatty acid chain elongation in mitochondria uses acyl carrier protein (ACP) as an acyl group carrier, but the enzyme accepts both ACP and CoA thioesters as substrates in vitro. Displays a preference for medium-chain over short- and long-chain substrates. May provide the octanoyl chain used for lipoic acid biosynthesis, regulating protein lipoylation and mitochondrial respiratory activity particularly in Purkinje cells. Involved in iron homeostasis; affecting Fe-S cluster assembly and ceramide metabolism. Required for proper morphology and bioenergetic functions of mitochondria. Required for maintenance of neurons. In Bos taurus (Bovine), this protein is Enoyl-[acyl-carrier-protein] reductase, mitochondrial (MECR).